The following is a 517-amino-acid chain: Glycerol kinase (517 aa).

Threonine 24 contributes to the ADP binding site. Threonine 24, threonine 25, and serine 26 together coordinate ATP. Position 24 (threonine 24) interacts with sn-glycerol 3-phosphate. Arginine 28 provides a ligand contact to ADP. Sn-glycerol 3-phosphate is bound by residues arginine 94, glutamate 95, tyrosine 146, and aspartate 261. Residues arginine 94, glutamate 95, tyrosine 146, aspartate 261, and glutamine 262 each coordinate glycerol. ADP contacts are provided by threonine 283 and glycine 327. Positions 283, 327, 331, and 428 each coordinate ATP. ADP-binding residues include glycine 428 and asparagine 432.

The protein belongs to the FGGY kinase family.

It carries out the reaction glycerol + ATP = sn-glycerol 3-phosphate + ADP + H(+). It participates in polyol metabolism; glycerol degradation via glycerol kinase pathway; sn-glycerol 3-phosphate from glycerol: step 1/1. Inhibited by fructose 1,6-bisphosphate (FBP). Functionally, key enzyme in the regulation of glycerol uptake and metabolism. Catalyzes the phosphorylation of glycerol to yield sn-glycerol 3-phosphate. This Mycobacterium tuberculosis (strain ATCC 25177 / H37Ra) protein is Glycerol kinase.